The sequence spans 294 residues: Basic endochitinase (294 aa).

The signal sequence occupies residues 1–24 (MNIKVSLLFILPIFLLLLTSKVKA). Positions 25–294 (GDIVVYWGQD…GYSSAIRGAV (270 aa)) constitute a GH18 domain. 2 cysteine pairs are disulfide-bonded: cysteine 44/cysteine 91 and cysteine 74/cysteine 81. The active-site Proton donor is the glutamate 151. Residues cysteine 182 and cysteine 211 are joined by a disulfide bond.

It belongs to the glycosyl hydrolase 18 family. Chitinase class II subfamily.

The catalysed reaction is Random endo-hydrolysis of N-acetyl-beta-D-glucosaminide (1-&gt;4)-beta-linkages in chitin and chitodextrins.. This protein functions as a defense against chitin containing fungal pathogens. This is Basic endochitinase from Nicotiana tabacum (Common tobacco).